A 994-amino-acid polypeptide reads, in one-letter code: Translocase of chloroplast 108, chloroplastic (994 aa).

Disordered stretches follow at residues 14 to 61 (KEAS…EDEP), 84 to 124 (TTDL…DPSV), and 152 to 287 (AVDG…DETR). Polar residues-rich tracts occupy residues 37 to 53 (GETTVVTTSISEGANES) and 84 to 98 (TTDLEKVSSTPTPSN). The span at 99-121 (AEKESPEATEVRIVEEGKLEKAD) shows a compositional bias: basic and acidic residues. Residues 166 to 197 (NDGDTDANTADEDNENDEDDVDEDEDEDDADM) show a composition bias toward acidic residues. Positions 249-268 (ASDSPGRNTQRPNGALSTQI) are enriched in polar residues. Low complexity predominate over residues 269–280 (TSTTDESASSDA). Positions 360–589 (DFACTILVLG…KLQETTAPGR (230 aa)) constitute an AIG1-type G domain. Residues 369–376 (GKTGVGKS) form a G1 region. A GTP-binding site is contributed by 372–377 (GVGKSS). S376 lines the Mg(2+) pocket. Residues 395 to 399 (PSTNK) are G2. A G3 region spans residues 416-419 (DTPG). Residues 488–491 (THAS) are G4. GTP-binding positions include H489 and 537-538 (EN). A G5 region spans residues 537-539 (ENH). 2 disordered regions span residues 616–659 (LPDE…EDLT) and 691–716 (EAKKRQAQMSKEELAEAEEAEDEAGN). Residues 620–643 (QAGESDESDDDEEEEDSDADDYDE) show a composition bias toward acidic residues. The span at 650–659 (LSKEELEDLT) shows a compositional bias: basic and acidic residues. Residues 705–714 (AEAEEAEDEA) are compositionally biased toward acidic residues. A helical transmembrane segment spans residues 969–989 (MVLIGIVPILRSLINCRFGFG).

It belongs to the TRAFAC class TrmE-Era-EngA-EngB-Septin-like GTPase superfamily. AIG1/Toc34/Toc159-like paraseptin GTPase family. TOC159 subfamily. Part of the TOC core complex. The cofactor is Mg(2+).

It localises to the plastid. The protein localises to the chloroplast outer membrane. Its function is as follows. GTPase involved in protein precursor import into chloroplasts. Seems to recognize chloroplast-destined precursor proteins and regulate their presentation to the translocation channel through GTP hydrolysis. Probably specialized in the import of nuclear encoded non-photosynthetic preproteins from the cytoplasm to the chloroplast. In Physcomitrium patens (Spreading-leaved earth moss), this protein is Translocase of chloroplast 108, chloroplastic.